A 1077-amino-acid polypeptide reads, in one-letter code: Error-prone DNA polymerase (1077 aa).

Belongs to the DNA polymerase type-C family. DnaE2 subfamily.

It is found in the cytoplasm. The catalysed reaction is DNA(n) + a 2'-deoxyribonucleoside 5'-triphosphate = DNA(n+1) + diphosphate. DNA polymerase involved in damage-induced mutagenesis and translesion synthesis (TLS). It is not the major replicative DNA polymerase. This is Error-prone DNA polymerase from Brucella abortus biovar 1 (strain 9-941).